The primary structure comprises 154 residues: Spermatogenesis-associated protein 19, mitochondrial (154 aa).

The transit peptide at 1–24 (MIITTWIMYIFARKTVGLPFPPRV) directs the protein to the mitochondrion. Ser26 and Ser116 each carry phosphoserine.

In terms of tissue distribution, expressed specifically in adult testis (at protein level).

The protein resides in the mitochondrion outer membrane. It localises to the mitochondrion. The protein localises to the cell projection. Its subcellular location is the cilium. It is found in the flagellum. Its function is as follows. Essential for sperm motility and male fertility. Plays an important role in sperm motility by regulating the organization and function of the mitochondria and is also required for correct sperm midpiece assembly. The sequence is that of Spermatogenesis-associated protein 19, mitochondrial (Spata19) from Mus musculus (Mouse).